The following is a 73-amino-acid chain: Cx9C motif-containing protein 4, mitochondrial (73 aa).

Residues 2–44 enclose the CHCH domain; it reads SNPCQKEACAIQDCLLSHQYDDAKCAKVIDQLYICCSKFYKDN. 2 short sequence motifs (cx9C motif) span residues 5-15 and 26-36; these read CQKEACAIQDC and CAKVIDQLYIC. Cystine bridges form between C5/C36 and C15/C26.

It belongs to the CMC4 family.

Its subcellular location is the mitochondrion intermembrane space. This is Cx9C motif-containing protein 4, mitochondrial (CMC4) from Saccharomyces cerevisiae (strain RM11-1a) (Baker's yeast).